The following is a 385-amino-acid chain: Hsp70/Hsp90 co-chaperone CNS1 (385 aa).

The interval methionine 1–serine 37 is disordered. TPR repeat units lie at residues alanine 83–aspartate 116, glutamate 121–asparagine 154, and valine 155–asparagine 189.

It belongs to the TTC4 family. As to quaternary structure, monomer. Component of Hsp70 and Hsp90 chaperone complexes. Interacts (via TPR repeats) with HSC82 and HSP82 (via C-terminal MEEVD pentapeptide). Interacts with CPR7, SSA1 and SPI1.

It is found in the cytoplasm. Co-chaperone that binds to the molecular chaperones Hsp90 (HSC82 and HSP82) and Hsp70 (SSA1). Stimulates SSA1 ATPase activity, but not Hsp90 ATPase activity. Involved in only a subset of Hsp90 functions. The sequence is that of Hsp70/Hsp90 co-chaperone CNS1 (CNS1) from Saccharomyces cerevisiae (strain ATCC 204508 / S288c) (Baker's yeast).